The chain runs to 118 residues: MAGLMKLACLIFACMIVAGPITSNAALSCGTVSGYVAPCIGYLAQNAPAVPTACCSGVTSLNNMARTTPDRQQACRCLVGAANALPTINVARAAGLPKACGVNIPYKISKTTNCNSVK.

An N-terminal signal peptide occupies residues 1–25 (MAGLMKLACLIFACMIVAGPITSNA). 4 disulfides stabilise this stretch: Cys-29–Cys-77, Cys-39–Cys-54, Cys-55–Cys-100, and Cys-75–Cys-114.

It belongs to the plant LTP family.

Plant non-specific lipid-transfer proteins transfer phospholipids as well as galactolipids across membranes. May play a role in wax or cutin deposition in the cell walls of expanding epidermal cells and certain secretory tissues. In Brassica oleracea var. italica (Broccoli), this protein is Non-specific lipid-transfer protein D (WAX9D).